Consider the following 341-residue polypeptide: GTPase Obg (341 aa).

The 159-residue stretch at 2–160 (SGFIDEVPIQ…FSLILELKLL (159 aa)) folds into the Obg domain. Residues 161–330 (ADIGIVGLPN…LLERIDKVFF (170 aa)) form the OBG-type G domain. Residues 167–174 (GLPNAGKS), 192–196 (FTTLS), 215–218 (DIPG), 282–285 (NKMD), and 311–313 (SAD) each bind GTP. Residues S174 and T194 each contribute to the Mg(2+) site.

Belongs to the TRAFAC class OBG-HflX-like GTPase superfamily. OBG GTPase family. As to quaternary structure, monomer. The cofactor is Mg(2+).

The protein resides in the cytoplasm. Its function is as follows. An essential GTPase which binds GTP, GDP and possibly (p)ppGpp with moderate affinity, with high nucleotide exchange rates and a fairly low GTP hydrolysis rate. Plays a role in control of the cell cycle, stress response, ribosome biogenesis and in those bacteria that undergo differentiation, in morphogenesis control. The chain is GTPase Obg from Leptospira biflexa serovar Patoc (strain Patoc 1 / Ames).